The following is a 338-amino-acid chain: Glyceraldehyde-3-phosphate dehydrogenase GAPC2, cytosolic (338 aa).

Residues 15 to 16 (RI), aspartate 37, and arginine 84 contribute to the NAD(+) site. 155–157 (SCT) is a binding site for D-glyceraldehyde 3-phosphate. Cysteine 156 acts as the Nucleophile in catalysis. Residue cysteine 156 is modified to S-glutathionyl cysteine; transient; alternate. S-nitrosocysteine; transient; alternate is present on cysteine 156. Residue cysteine 160 is modified to S-nitrosocysteine; transient. Residues threonine 186, 215-216 (TG), and arginine 238 contribute to the D-glyceraldehyde 3-phosphate site. NAD(+) is bound at residue asparagine 320.

This sequence belongs to the glyceraldehyde-3-phosphate dehydrogenase family. As to quaternary structure, homotetramer. Interacts with PLDDELTA. Binds to DPB3-1/NF-YC10 in response to heat-stress; this interaction promotes DPB3-1/NF-YC10 DNA-binding ability to its target promoter. S-glutathionylation at Cys-156 in the presence of oxidized glutathione (GSSG). S-nitrosylation at Cys-156 and Cys-160 in the presence of S-nitrosoglutathione (GSNO) or sodium nitroprusside (SNP). These reactions may be both a protective mechanism against irreversible oxidation and a mean to store inhibited enzyme in a recoverable form.

The protein localises to the cytoplasm. Its subcellular location is the nucleus. The enzyme catalyses D-glyceraldehyde 3-phosphate + phosphate + NAD(+) = (2R)-3-phospho-glyceroyl phosphate + NADH + H(+). The protein operates within carbohydrate degradation; glycolysis; pyruvate from D-glyceraldehyde 3-phosphate: step 1/5. Inhibition by oxidized glutathione (GSSG), S-nitrosoglutathione (GSNO) and hydrogen peroxide. Its function is as follows. Key enzyme in glycolysis that catalyzes the first step of the pathway by converting D-glyceraldehyde 3-phosphate (G3P) into 3-phospho-D-glyceroyl phosphate. Essential for the maintenance of cellular ATP levels and carbohydrate metabolism. Binds DNA in vitro. Together with DNA polymerase II subunit B3-1 (DPB3-1) and GAPC1, enhances heat tolerance and promotes the expression of heat-inducible genes. The sequence is that of Glyceraldehyde-3-phosphate dehydrogenase GAPC2, cytosolic from Arabidopsis thaliana (Mouse-ear cress).